The following is a 96-amino-acid chain: Gastrolith matrix protein (96 aa).

9 consecutive repeat copies span residues 11 to 15 (GSAGF), 16 to 20 (GSTNF), 21 to 25 (GSSGF), 30 to 34 (GSTGF), 35 to 39 (GSAGF), 50 to 54 (GSAAF), 55 to 59 (GSSSF), 65 to 69 (GSTGF), and 70 to 74 (GSSSF). Residues 11–74 (GSAGFGSTNF…GSTGFGSSSF (64 aa)) form a 9 X 5 AA tandem repeat of G-S-X-X-F region. The segment at 75–96 (GSTSGLPYLVVIPNNPAVGGLR) is disordered.

In terms of processing, the N-terminus is blocked. In terms of tissue distribution, expressed in the gastroliths.

The protein localises to the secreted. Its function is as follows. Associates with chitin and plays a role in calcification. The polypeptide is Gastrolith matrix protein (Procambarus clarkii (Red swamp crayfish)).